Consider the following 570-residue polypeptide: Dwarfin sma-4 (570 aa).

Positions 115–134 are disordered; sequence SSQASSQPPPTPTVNPTPIP. Residues 121-134 show a composition bias toward pro residues; the sequence is QPPPTPTVNPTPIP. The MH1 domain maps to 150–273; the sequence is QISHVLQCYQ…YERVVSNRIT (124 aa). Cys-203, Cys-247, Cys-258, and His-263 together coordinate Zn(2+). The 221-residue stretch at 350–570 folds into the MH2 domain; it reads WCSIIYYELD…LKNSSQFGSS (221 aa).

It belongs to the dwarfin/SMAD family.

Its subcellular location is the cytoplasm. The protein localises to the nucleus. In terms of biological role, involved in TGF-beta pathway. This chain is Dwarfin sma-4 (sma-4), found in Caenorhabditis elegans.